The primary structure comprises 415 residues: uncharacterized protein (415 aa).

This is an uncharacterized protein from Rickettsia prowazekii (strain Madrid E).